Here is a 165-residue protein sequence, read N- to C-terminus: Endoribonuclease YbeY (165 aa).

3 residues coordinate Zn(2+): histidine 130, histidine 134, and histidine 140.

The protein belongs to the endoribonuclease YbeY family. Zn(2+) is required as a cofactor.

It is found in the cytoplasm. In terms of biological role, single strand-specific metallo-endoribonuclease involved in late-stage 70S ribosome quality control and in maturation of the 3' terminus of the 16S rRNA. This is Endoribonuclease YbeY from Streptococcus pyogenes serotype M1.